A 383-amino-acid polypeptide reads, in one-letter code: tRNA (guanine(26)-N(2))-dimethyltransferase (383 aa).

A Trm1 methyltransferase domain is found at 4–371 (EIITEGRTPL…ASPEEFEAVL (368 aa)). Arginine 38, arginine 63, aspartate 80, aspartate 108, and alanine 109 together coordinate S-adenosyl-L-methionine. Zn(2+) contacts are provided by cysteine 243, cysteine 246, cysteine 258, and cysteine 261.

It belongs to the class I-like SAM-binding methyltransferase superfamily. Trm1 family.

It catalyses the reaction guanosine(26) in tRNA + 2 S-adenosyl-L-methionine = N(2)-dimethylguanosine(26) in tRNA + 2 S-adenosyl-L-homocysteine + 2 H(+). Dimethylates a single guanine residue at position 26 of a number of tRNAs using S-adenosyl-L-methionine as donor of the methyl groups. In Methanopyrus kandleri (strain AV19 / DSM 6324 / JCM 9639 / NBRC 100938), this protein is tRNA (guanine(26)-N(2))-dimethyltransferase.